The primary structure comprises 295 residues: 4-diphosphocytidyl-2-C-methyl-D-erythritol kinase (295 aa).

Residue K22 is part of the active site. 106-116 (PAGGGFGGGSS) serves as a coordination point for ATP. Residue D148 is part of the active site.

Belongs to the GHMP kinase family. IspE subfamily.

The catalysed reaction is 4-CDP-2-C-methyl-D-erythritol + ATP = 4-CDP-2-C-methyl-D-erythritol 2-phosphate + ADP + H(+). It participates in isoprenoid biosynthesis; isopentenyl diphosphate biosynthesis via DXP pathway; isopentenyl diphosphate from 1-deoxy-D-xylulose 5-phosphate: step 3/6. Catalyzes the phosphorylation of the position 2 hydroxy group of 4-diphosphocytidyl-2C-methyl-D-erythritol. The sequence is that of 4-diphosphocytidyl-2-C-methyl-D-erythritol kinase from Xanthomonas campestris pv. campestris (strain 8004).